A 1250-amino-acid polypeptide reads, in one-letter code: DNA-directed RNA polymerase subunit beta (1250 aa).

Positions 1215–1250 (QDLNDDDINPDDTIDAELDDNLFDDDFDDTFDDDDL) are disordered.

It belongs to the RNA polymerase beta chain family. In terms of assembly, the RNAP catalytic core consists of 2 alpha, 1 beta, 1 beta' and 1 omega subunit. When a sigma factor is associated with the core the holoenzyme is formed, which can initiate transcription.

It catalyses the reaction RNA(n) + a ribonucleoside 5'-triphosphate = RNA(n+1) + diphosphate. DNA-dependent RNA polymerase catalyzes the transcription of DNA into RNA using the four ribonucleoside triphosphates as substrates. The chain is DNA-directed RNA polymerase subunit beta from Acetivibrio thermocellus (strain ATCC 27405 / DSM 1237 / JCM 9322 / NBRC 103400 / NCIMB 10682 / NRRL B-4536 / VPI 7372) (Clostridium thermocellum).